The chain runs to 204 residues: Guanylate kinase (204 aa).

One can recognise a Guanylate kinase-like domain in the interval 16-196 (AKVIIFSAPS…AKAHALKVIK (181 aa)). Position 23–30 (23–30 (APSGSGKS)) interacts with ATP.

Belongs to the guanylate kinase family.

It is found in the cytoplasm. It catalyses the reaction GMP + ATP = GDP + ADP. Functionally, essential for recycling GMP and indirectly, cGMP. The chain is Guanylate kinase from Bacteroides fragilis (strain ATCC 25285 / DSM 2151 / CCUG 4856 / JCM 11019 / LMG 10263 / NCTC 9343 / Onslow / VPI 2553 / EN-2).